The sequence spans 100 residues: Urease subunit gamma (100 aa).

The protein belongs to the urease gamma subunit family. In terms of assembly, heterotrimer of UreA (gamma), UreB (beta) and UreC (alpha) subunits. Three heterotrimers associate to form the active enzyme.

It is found in the cytoplasm. It catalyses the reaction urea + 2 H2O + H(+) = hydrogencarbonate + 2 NH4(+). It participates in nitrogen metabolism; urea degradation; CO(2) and NH(3) from urea (urease route): step 1/1. The sequence is that of Urease subunit gamma from Staphylococcus epidermidis (strain ATCC 35984 / DSM 28319 / BCRC 17069 / CCUG 31568 / BM 3577 / RP62A).